The chain runs to 290 residues: Glycine--tRNA ligase alpha subunit (290 aa).

The protein belongs to the class-II aminoacyl-tRNA synthetase family. In terms of assembly, tetramer of two alpha and two beta subunits.

It is found in the cytoplasm. The catalysed reaction is tRNA(Gly) + glycine + ATP = glycyl-tRNA(Gly) + AMP + diphosphate. This Synechococcus sp. (strain CC9902) protein is Glycine--tRNA ligase alpha subunit.